The following is a 632-amino-acid chain: 1-deoxy-D-xylulose-5-phosphate synthase (632 aa).

Residues His-87 and 128–130 (GHS) each bind thiamine diphosphate. Residue Asp-159 coordinates Mg(2+). Residues 160-161 (GA), Asn-188, Phe-295, and Glu-377 each bind thiamine diphosphate. Residue Asn-188 participates in Mg(2+) binding.

Belongs to the transketolase family. DXPS subfamily. As to quaternary structure, homodimer. The cofactor is Mg(2+). Requires thiamine diphosphate as cofactor.

The enzyme catalyses D-glyceraldehyde 3-phosphate + pyruvate + H(+) = 1-deoxy-D-xylulose 5-phosphate + CO2. It functions in the pathway metabolic intermediate biosynthesis; 1-deoxy-D-xylulose 5-phosphate biosynthesis; 1-deoxy-D-xylulose 5-phosphate from D-glyceraldehyde 3-phosphate and pyruvate: step 1/1. Functionally, catalyzes the acyloin condensation reaction between C atoms 2 and 3 of pyruvate and glyceraldehyde 3-phosphate to yield 1-deoxy-D-xylulose-5-phosphate (DXP). The chain is 1-deoxy-D-xylulose-5-phosphate synthase from Stutzerimonas stutzeri (strain A1501) (Pseudomonas stutzeri).